The sequence spans 204 residues: Ricin B-like lectin R40G3 (204 aa).

Residues 54-200 (TVKVYCRANP…CEGDNQRWKI (147 aa)) form the Ricin B-type lectin domain.

Expressed in shoots and lamina.

Functionally, lectin which binds carbohydrates in vitro. Interacts through its lectin domain with glycan structures containing specific motifs. This chain is Ricin B-like lectin R40G3, found in Oryza sativa subsp. japonica (Rice).